Reading from the N-terminus, the 605-residue chain is Isocitrate dehydrogenase kinase/phosphatase (605 aa).

Residues 327 to 333 and Lys-348 contribute to the ATP site; that span reads APGIKGL. Residue Asp-383 is part of the active site.

It belongs to the AceK family.

Its subcellular location is the cytoplasm. It catalyses the reaction L-seryl-[isocitrate dehydrogenase] + ATP = O-phospho-L-seryl-[isocitrate dehydrogenase] + ADP + H(+). In terms of biological role, bifunctional enzyme which can phosphorylate or dephosphorylate isocitrate dehydrogenase (IDH) on a specific serine residue. This is a regulatory mechanism which enables bacteria to bypass the Krebs cycle via the glyoxylate shunt in response to the source of carbon. When bacteria are grown on glucose, IDH is fully active and unphosphorylated, but when grown on acetate or ethanol, the activity of IDH declines drastically concomitant with its phosphorylation. This is Isocitrate dehydrogenase kinase/phosphatase from Burkholderia lata (strain ATCC 17760 / DSM 23089 / LMG 22485 / NCIMB 9086 / R18194 / 383).